We begin with the raw amino-acid sequence, 256 residues long: F-actin-capping protein subunit alpha (256 aa).

A Phosphoserine modification is found at serine 31.

Belongs to the F-actin-capping protein alpha subunit family. In terms of assembly, component of the F-actin capping complex, composed of a heterodimer of an alpha and a beta subunit.

It is found in the cytoplasm. The protein localises to the cytoskeleton. Its subcellular location is the actin patch. Its function is as follows. F-actin-capping proteins bind in a Ca(2+)-independent manner to the fast growing ends of actin filaments (barbed end) thereby blocking the exchange of subunits at these ends. Unlike other capping proteins (such as gelsolin and severin), these proteins do not sever actin filaments. Competes with formin cdc12 for attachment to the actin filaments barbed ends. Slowly replaces cdc12 on the barbed ends in preparation for filament disassembly during contractile ring constriction. The polypeptide is F-actin-capping protein subunit alpha (acp1) (Schizosaccharomyces pombe (strain 972 / ATCC 24843) (Fission yeast)).